Here is a 315-residue protein sequence, read N- to C-terminus: MSNLSVGQIIMDAQRMASRVKDLDALGTALLEEAENNNRLVESLRQYQDDIESLNRISNNKTNADMVNRIQQQNINSSEILKENRELKIFIEDYERAMELMMQKYREHTVSKVLDSKFSFKELYNERMWQVIREQREKINEMAAVMQLAASVDDGVVQRELQTISQLRLENETLRELLQISKQYGSSQRPIRESDHLLEEKAVQTDSTADDSADDLSISGASVENMNNNSVIQMYSSPEQPAKVAGTTNSFNTAPVHSQSETQAPSVTLETAPPGEEPLANDNNNGPAVNTTSAPPPATTSNESVEDQATVAPAT.

Coiled-coil stretches lie at residues 32-99 and 156-183; these read EEAE…RAME and VVQRELQTISQLRLENETLRELLQISKQ. Disordered regions lie at residues 201–222 and 238–315; these read KAVQTDSTADDSADDLSISGAS and PEQP…APAT. Polar residues predominate over residues 246–269; that stretch reads GTTNSFNTAPVHSQSETQAPSVTL.

The protein belongs to the SIKE family.

The protein is FGFR1 oncogene partner 2 homolog of Drosophila melanogaster (Fruit fly).